The following is a 523-amino-acid chain: MGYGTRKLSDEYEVSEILGRGGFSVVRKGTKKSSIEEEKSQSQVAIKTLRRLGASNNPSGLPRKKDIGEKSTIGFPTMRQVSVSDTLLTNEILVMRRIVENVSPHPNVIDLYDVYEDTNGVHLVLELCSGGELFDRIVAQDKYSETEAATVVHQIASGLEAVHRANIVHRDLKPENCLFLDVRKDSPLKIMDFGLSSVEEFTDPVVGLFGSIDYVSPEALSQGKITTKSDMWSLGVILYILLSGYPPFIAQNNRQKQQMIMNGNFSFYEKTWKGISQPAKNLISSLLTVDPSKRPSALELLSDPWVKGEKAKDVQMDPEIVSRLQSFNARRKLRAAAIASVWSSTIFLRTKKLKSLVGSYDLKEEEIENLRMHFKKICADRDNATLSEFEEVLKAMNMLSLIPFASRIFDLFDNNRDGTVDMREILCGFSSLKNSKGEDALRLCFQMYDTDRSGCISKEEVASMLRALPYDCLPTDITEPGKLDEIFDLMDANNDGKVTFDEFKAAMQRDSSLQDVVLSSIRP.

Positions Y12 to V306 constitute a Protein kinase domain. Residues L18 to V26 and K47 contribute to the ATP site. The active-site Proton acceptor is the D171. T271 carries the phosphothreonine modification. The interval A329–W342 is calmodulin-binding. 3 EF-hand domains span residues S400–S435, K436–D471, and T478–L513. 15 residues coordinate Ca(2+): D413, N415, D417, T419, E424, D449, D451, S453, C455, E460, D491, N493, D495, K497, and E502.

The protein belongs to the protein kinase superfamily. CAMK Ser/Thr protein kinase family. CaMK subfamily. In terms of assembly, interacts with IPD3. Post-translationally, autophosphorylation. Highly expressed in roots. Expressed in root hairs and nodules. Expressed at low levels in flowers. Not detected in leaves or stems.

It localises to the nucleus. The catalysed reaction is L-seryl-[protein] + ATP = O-phospho-L-seryl-[protein] + ADP + H(+). It catalyses the reaction L-threonyl-[protein] + ATP = O-phospho-L-threonyl-[protein] + ADP + H(+). With respect to regulation, activated by calcium. Autophosphorylation may play an important role in the regulation of the kinase activity. During nodulation, plays a central role in bacterial infection and contributes to nodule organogenesis. Protein kinase that recognizes the calcium spiking induced by Nod factors and translates this signal to components controlling nodulation and mycorrhizal infection responses. May phosphorylate the NSP1 protein. Required in epidermal and cortical cells to promote infection thread (IT) formation in root hairs. This chain is Calcium and calcium/calmodulin-dependent serine/threonine-protein kinase DMI-3, found in Medicago truncatula (Barrel medic).